The following is a 1312-amino-acid chain: MHGAGEQQQRYRYNARSDEQHHHPSTSSHQYQQQGARQMHQMHPIQATLMCTPTTTSAAASTSSSGGSNSSGGSGGHRQQGNILRIGNSIKIGDNILEPAGTLVFSQADGTPWTGQRIVVNGSTHAVVKANLFPIGTTPPVLNMQSNQNWYMNQPSGTVPMSSNAPATTSSATPDSGIQSVPTSPPSPSYAMMNDVDIGDHDDEEDDDGPADFTDMPLLKPVDEDDDCYDVPCTSEGPPPNNSNPAITTIPSSCSTPAPPKESLPTGMNVEEWGSFLIASNMDREEIVRRLMAHDPEMAKAIAMRIRELSAEESKKKKDMEAEVSSTTPTTPRARGTRTRNKCATRSTNSPDVTTSNLPEEPSTSTMGLVKENEDVEKVEGKRRGRKPKKRRGFHKESFEDLESDAKKSKAEQHEDHLPEASCSSRPESVIPPPVDPIQFRLKVREMMERKLEQLTQKMSEDMTELRLSHLTSSKMVNGERGKRRESFLRQLNEQSKKLRKGGMLGRKRLRMFMTESDILEENKDNIKKEVKEESTPPPTKLRGRLPSRRTREPSEIVNPEPVEKKFNGEYFEITKSVPSSDDIIPLWMAPSLTCGCTKGACTSDMDCLNRALRVQCSSDCSVPYCSNRRFWKEDCGNKLCVSNGPRSKRVLKTKIARRAGEFLCEYAGEVITREQAQEKFAQDRDPRIIAIAAHLFVDATKRSNIARFIKHSCKPNSRLEVWSVNGFYRAGVFALSDLNPNAEITVDKSDLLPFDMACNCGATECKRVIRGVRWRCADPNEKIVTRRFVIRNRRKTIERSSHSGLPAILQTPMDENSSIRLKMKQVLAAFAFRVRKIDGSMSRTMLPHYTLIIKFLKTKGNNPNPVEFVSLFRKWLEAIDDDDLERAFVAIESHYMSSSILSSSLQSKKAKDNAPRARALSTSCPSPVPSKRGDADLSYLESLYPIGSYDPDDAWESYSTNKKGNAVRCICGALDEEGTMVQCDTCHFWLHVDCCQYVVRSNEKAQKSKNPPSDDGEYICDFCTNKQNGLRPSADVKLTEQPDVRFENCDYYRSLINRRGIQVVLNETVYVNRVLPEDHKAMLRNLREEKKGSKQKDTNKYRFPKAATSPLPIEKVDRKNARIFRVERLFVCPGNNRFVFGSFYAWPHETYADAGRVFSKKEVFATPYYETLPLDEVIGRCLVLDTATWCKGRPKVPKFKEDDVFLCEMQIGKTQRVFEKVPPKNRYPINTNSYVFTEFTHPKKVVRDFRPYDPSNPSPKPPKTSSIPSTSSIDPPQSSSDGLPEVDTKKLSKRHIQRVLKRLVKNGSRRS.

2 stretches are compositionally biased toward polar residues: residues 1 to 11 and 25 to 36; these read MHGAGEQQQRY and STSSHQYQQQGA. Disordered stretches follow at residues 1–41, 54–81, 154–223, 312–435, and 524–556; these read MHGA…QMHQ, TTTSAAASTSSSGGSNSSGGSGGHRQQG, QPSG…KPVD, EESK…PPPV, and KDNIKKEVKEESTPPPTKLRGRLPSRRTREPSE. The span at 54-68 shows a compositional bias: low complexity; that stretch reads TTTSAAASTSSSGGS. Residues 69 to 78 show a composition bias toward gly residues; sequence NSSGGSGGHR. The segment covering 160–176 has biased composition (low complexity); it reads PMSSNAPATTSSATPDS. A compositionally biased stretch (acidic residues) spans 200–210; the sequence is DHDDEEDDDGP. Basic and acidic residues predominate over residues 312–321; that stretch reads EESKKKKDME. Positions 344-367 are enriched in polar residues; sequence ATRSTNSPDVTTSNLPEEPSTSTM. Residues 371 to 382 show a composition bias toward basic and acidic residues; sequence KENEDVEKVEGK. Positions 383-394 are enriched in basic residues; sequence RRGRKPKKRRGF. Basic and acidic residues-rich tracts occupy residues 395 to 419 and 524 to 535; these read HKESFEDLESDAKKSKAEQHEDHLP and KDNIKKEVKEES. An AWS domain is found at 590 to 635; that stretch reads APSLTCGCTKGACTSDMDCLNRALRVQCSSDCSVPYCSNRRFWKED. Positions 638–750 constitute an SET domain; sequence NKLCVSNGPR…PNAEITVDKS (113 aa). Positions 913–934 are disordered; that stretch reads DNAPRARALSTSCPSPVPSKRG. The segment at 967-1027 adopts a PHD-type zinc-finger fold; the sequence is AVRCICGALD…EYICDFCTNK (61 aa). The 124-residue stretch at 1100-1223 folds into the BAH domain; the sequence is NKYRFPKAAT…KTQRVFEKVP (124 aa). A disordered region spans residues 1248 to 1295; sequence RDFRPYDPSNPSPKPPKTSSIPSTSSIDPPQSSSDGLPEVDTKKLSKR. Positions 1264 to 1281 are enriched in low complexity; that stretch reads KTSSIPSTSSIDPPQSSS.

Belongs to the class V-like SAM-binding methyltransferase superfamily. Histone-lysine methyltransferase family. SET2 subfamily. Widely expressed throughout embryonic development and into adulthood.

The protein localises to the nucleus. The catalysed reaction is L-lysyl-[histone] + S-adenosyl-L-methionine = N(6)-methyl-L-lysyl-[histone] + S-adenosyl-L-homocysteine + H(+). In terms of biological role, probable histone methyltransferase. Essential protein required to maintain expression of homeotic genes egl-5 and mab-5. May play an analogous role to the trithorax Group (trxG) proteins. TrxG proteins form multiprotein complexes that are required to maintain the transcriptionally active state of homeotic genes throughout development. May act via a modification of chromatin. In Caenorhabditis elegans, this protein is Probable histone-lysine N-methyltransferase lin-59 (lin-59).